Reading from the N-terminus, the 327-residue chain is Methionyl-tRNA formyltransferase (327 aa).

118-121 (SLLP) is a (6S)-5,6,7,8-tetrahydrofolate binding site.

Belongs to the Fmt family.

It carries out the reaction L-methionyl-tRNA(fMet) + (6R)-10-formyltetrahydrofolate = N-formyl-L-methionyl-tRNA(fMet) + (6S)-5,6,7,8-tetrahydrofolate + H(+). Functionally, attaches a formyl group to the free amino group of methionyl-tRNA(fMet). The formyl group appears to play a dual role in the initiator identity of N-formylmethionyl-tRNA by promoting its recognition by IF2 and preventing the misappropriation of this tRNA by the elongation apparatus. The polypeptide is Methionyl-tRNA formyltransferase (Corynebacterium jeikeium (strain K411)).